The sequence spans 109 residues: MRFSLAILALPVLAAATAVPRGGASKCNSGPVQCCNTLVDTKDKHQTNIVGALLGLDLGSLTGLAGVNCSPVSVIGVGGNSCSTQTVCCEGTQFNGLVNVGCTPINVGL.

The N-terminal stretch at 1–22 is a signal peptide; sequence MRFSLAILALPVLAAATAVPRG. Disulfide bonds link Cys27–Cys88, Cys34–Cys82, Cys35–Cys69, and Cys89–Cys102.

Belongs to the fungal hydrophobin family. As to quaternary structure, self-assembles to form functional amyloid fibrils called rodlets. Self-assembly into fibrillar rodlets occurs spontaneously at hydrophobic:hydrophilic interfaces and the rodlets further associate laterally to form amphipathic monolayers.

It is found in the secreted. The protein localises to the cell wall. Functionally, aerial growth, conidiation, and dispersal of filamentous fungi in the environment rely upon a capability of their secreting small amphipathic proteins called hydrophobins (HPBs) with low sequence identity. Class I can self-assemble into an outermost layer of rodlet bundles on aerial cell surfaces, conferring cellular hydrophobicity that supports fungal growth, development and dispersal; whereas Class II form highly ordered films at water-air interfaces through intermolecular interactions but contribute nothing to the rodlet structure. SC1 is a dikaryon-specific class I hydrophobin that contributes to the formation of aerial hyphae and fruiting bodies. The polypeptide is Class I hydrophobin SC1 (Schizophyllum commune (Split gill fungus)).